Here is a 1687-residue protein sequence, read N- to C-terminus: Helicase sen1 (1687 aa).

A disordered region spans residues 781–801; the sequence is VIKPSPTPQITVKQNTTKSSS. A compositionally biased stretch (polar residues) spans 788–801; sequence PQITVKQNTTKSSS. ATP-binding positions include Gln1134, 1155-1159, Gln1407, Tyr1445, and Glu1574; that span reads GTGKT. The disordered stretch occupies residues 1661–1687; the sequence is MKNEEFVEPPSKKLANSEPSKEIRQRS.

Belongs to the DNA2/NAM7 helicase family. As to quaternary structure, monomer.

It localises to the nucleus. Functionally, ATP-dependent 5'-&gt;3' DNA/RNA helicase required for the expression and maturation of diverse classes of non-protein-coding RNAs like precursor tRNAs, rRNAs and small nuclear (snRNA) and nucleolar (snoRNA) RNAs. Directs RNA polymerase II transcription termination on snoRNAs as well as on several short protein-coding genes. May also play a role in transcription-coupled nucleotide excision repair. The sequence is that of Helicase sen1 (sen1) from Schizosaccharomyces pombe (strain 972 / ATCC 24843) (Fission yeast).